The chain runs to 125 residues: Small ribosomal subunit protein eS6 (125 aa).

The protein belongs to the eukaryotic ribosomal protein eS6 family.

The chain is Small ribosomal subunit protein eS6 from Pyrococcus abyssi (strain GE5 / Orsay).